A 469-amino-acid polypeptide reads, in one-letter code: MLPSWTIGLLLLATVRGKEICYEPFGCFSDEKPWTGILQRPLKLFPWSPEDIDAHFLLYTNENPNNYQRINITDLATVRASNFQLDRKTRFVIHGFIDDGDSGWPTDLCKKMFKVEKVNCICVDWEHGAWTKYTQAVHNTRVVGAEIAFFIQGLSTELGYGPENVHLIGHSLGAQLAAEAGRRLGGQVGRITGLDPAQPCFEGTPEEVRLDPSDAMFVDVIHTDSASIIPFLSLGIRQKVGHLDFYPNGGKEMPGCQKNILSTIIDINGIWQGIQDFVACSHLRSYKYYSSSILNPDGFLGYPCASYEEFQEGGCFPCPAGGCPKMGHYADQFQGKTSAVGQTFFLNTGSSGNFTSWRYRVSVTLAGTKKVRGSIRIALYGSNGNSKQYQIFKGSLQPNASHTHDIDVDLNVGKVQKVKFLWNNNVINLFWPKLGASRVTVQGGEDRTEYNFCSNDTMRENALQTLYPC.

Positions 1-17 are cleaved as a signal peptide; the sequence is MLPSWTIGLLLLATVRG. An intrachain disulfide couples cysteine 21 to cysteine 27. Asparagine 71 is a glycosylation site (N-linked (GlcNAc...) asparagine). Residues 93–105 are required for galactolipase activity; sequence IHGFIDDGDSGWP. Cysteines 109 and 120 form a disulfide. Serine 171 serves as the catalytic Nucleophile. Aspartate 195 functions as the Charge relay system in the catalytic mechanism. Ca(2+) is bound by residues glutamate 206, arginine 209, aspartate 211, and aspartate 214. Cysteine 256 and cysteine 280 are joined by a disulfide. Positions 257–279 are required for galactolipase activity; that stretch reads QKNILSTIIDINGIWQGIQDFVA. Catalysis depends on histidine 282, which acts as the Charge relay system. Intrachain disulfides connect cysteine 304/cysteine 315 and cysteine 318/cysteine 323. 3 N-linked (GlcNAc...) asparagine glycosylation sites follow: asparagine 353, asparagine 399, and asparagine 455. A PLAT domain is found at 357-469; sequence WRYRVSVTLA…ENALQTLYPC (113 aa). Cysteine 453 and cysteine 469 are joined by a disulfide.

Belongs to the AB hydrolase superfamily. Lipase family.

Its subcellular location is the secreted. It localises to the zymogen granule membrane. The protein resides in the cell projection. The protein localises to the neuron projection. The enzyme catalyses a triacylglycerol + H2O = a diacylglycerol + a fatty acid + H(+). The catalysed reaction is a 1,2-diacyl-3-O-(beta-D-galactosyl)-sn-glycerol + 2 H2O = 3-beta-D-galactosyl-sn-glycerol + 2 a fatty acid + 2 H(+). It carries out the reaction 1,2,3-tri-(9Z-octadecenoyl)-glycerol + H2O = di-(9Z)-octadecenoylglycerol + (9Z)-octadecenoate + H(+). It catalyses the reaction di-(9Z)-octadecenoylglycerol + H2O = (9Z-octadecenoyl)-glycerol + (9Z)-octadecenoate + H(+). The enzyme catalyses (9Z-octadecenoyl)-glycerol + H2O = glycerol + (9Z)-octadecenoate + H(+). The catalysed reaction is 1-(9Z-octadecenoyl)-glycerol + H2O = glycerol + (9Z)-octadecenoate + H(+). It carries out the reaction 1,2,3-tripropanoylglycerol + H2O = dipropanoylglycerol + propanoate + H(+). It catalyses the reaction 1,2,3-tributanoylglycerol + H2O = dibutanoylglycerol + butanoate + H(+). The enzyme catalyses 1,2,3-trioctanoylglycerol + H2O = dioctanoylglycerol + octanoate + H(+). The catalysed reaction is 1,2-didecanoylglycerol + H2O = decanoylglycerol + decanoate + H(+). It carries out the reaction long chain 1,2-diacyl-3-O-beta-D-galactosyl-sn-glycerol + H2O = long chain acyl-3-O-beta-D-galactosyl-sn-glycerol + a fatty acid + H(+). It catalyses the reaction 1,2-dioctanoyl-3-O-beta-D-galactosyl-sn-glycerol + H2O = octanoyl-3-(beta-D-galactosyl)-sn-glycerol + octanoate + H(+). The enzyme catalyses 1,2-didodecanoyl-3-beta-D-galactosyl-sn-glycerol + H2O = dodecanoyl-3-beta-D-galactosyl-sn-glycerol + dodecanoate + H(+). The catalysed reaction is 1-beta-D-galactosyl-2,3-didodecanoyl-sn-glycerol + H2O = 1-beta-D-galactosyl-dodecanoyl-sn-glycerol + dodecanoate + H(+). It carries out the reaction a 1,2-diacyl-3-O-[alpha-D-galactosyl-(1-&gt;6)-beta-D-galactosyl]-sn-glycerol + H2O = acyl-3-O-[alpha-D-galactosyl-(1-&gt;6)-beta-D-galactosyl]-sn-glycerol + a fatty acid + H(+). It catalyses the reaction long chain 1,2-diacyl-3-O-[alpha-D-galactosyl-(1-&gt;6)-beta-D-galactosyl]-sn-glycerol + H2O = long chain acyl-3-O-[alpha-D-galactosyl-(1-&gt;6)-beta-D-galactosyl]-sn-glycerol + a fatty acid + H(+). The enzyme catalyses 1,2-dioctanoyl-3-O-[alpha-D-galactosyl-(1-&gt;6)-beta-D-galactosyl]-sn-glycerol + H2O = octanoyl-3-O-[alpha-D-galactosyl-(1-&gt;6)-beta-D-galactosyl]-sn-glycerol + octanoate + H(+). The catalysed reaction is 1,2-didodecanoyl-3-O-[alpha-D-galactosyl-(1-&gt;6)-beta-D-galactosyl]-sn-glycerol + H2O = dodecanoyl-3-O-[alpha-D-galactosyl-(1-&gt;6)-beta-D-galactosyl]-sn-glycerol + dodecanoate + H(+). It carries out the reaction a 1,2-diacyl-sn-glycero-3-phosphocholine + H2O = a monoacyl-sn-glycero-3-phosphocholine + a fatty acid + H(+). It functions in the pathway glycerolipid metabolism; triacylglycerol degradation. Its pathway is glycolipid metabolism. Its function is as follows. Lipase that primarily hydrolyzes triglycerides and galactosylglycerides. In neonates, may play a major role in pancreatic digestion of dietary fats such as milk fat globules enriched in long-chain triglycerides. Hydrolyzes short-, medium- and long-chain fatty acyls in triglycerides without apparent positional specificity. Can completely deacylate triacylglycerols. When the liver matures and bile salt synthesis increases, likely functions mainly as a galactolipase and monoacylglycerol lipase. Hydrolyzes monogalactosyldiglycerols (MGDG) and digalactosyldiacylglycerols (DGDG) present in a plant-based diet, releasing long-chain polyunsaturated fatty acids. Hydrolyzes medium- and long-chain fatty acyls in galactolipids. May act together with LIPF to hydrolyze partially digested triglycerides. Hydrolyzes long-chain monoglycerides with high efficiency. In cytotoxic T cells, contributes to perforin-dependent cell lysis, but is unlikely to mediate direct cytotoxicity. Also has low phospholipase activity. In neurons, required for the localization of the phospholipid 1-oleoyl-2-palmitoyl-PC (OPPC) to neurite tips through acyl chain remodeling of membrane phospholipids. The resulting OPPC-rich lipid membrane domain recruits the t-SNARE protein STX4 by selectively interacting with the STX4 transmembrane domain and this promotes surface expression of the dopamine transporter SLC6A3/DAT at neurite tips by facilitating fusion of SLC6A3-containing transport vesicles with the plasma membrane. In Bos taurus (Bovine), this protein is Pancreatic lipase-related protein 2.